A 494-amino-acid polypeptide reads, in one-letter code: Glutamate--tRNA ligase (494 aa).

The short motif at 10 to 20 is the 'HIGH' region element; that stretch reads PSPTGDPHVGT. Positions 107, 109, 134, and 136 each coordinate Zn(2+). Residues 251 to 255 carry the 'KMSKS' region motif; sequence KLSKR. Position 254 (lysine 254) interacts with ATP.

The protein belongs to the class-I aminoacyl-tRNA synthetase family. Glutamate--tRNA ligase type 1 subfamily. Monomer. The cofactor is Zn(2+).

It is found in the cytoplasm. It catalyses the reaction tRNA(Glu) + L-glutamate + ATP = L-glutamyl-tRNA(Glu) + AMP + diphosphate. Functionally, catalyzes the attachment of glutamate to tRNA(Glu) in a two-step reaction: glutamate is first activated by ATP to form Glu-AMP and then transferred to the acceptor end of tRNA(Glu). The chain is Glutamate--tRNA ligase from Pseudomonas aeruginosa (strain UCBPP-PA14).